The sequence spans 209 residues: NAD(P)H-quinone oxidoreductase subunit N, chloroplastic (209 aa).

Residues Met-1–Lys-45 constitute a chloroplast transit peptide.

This sequence belongs to the NDH complex subunit N family. In terms of assembly, part of the chloroplast NDH complex, composed of a mixture of chloroplast and nucleus encoded subunits. Component of the NDH subcomplex A, at least composed of ndhH, ndhI, ndhJ, ndhK, ndhL, ndhM, ndhN and ndhO.

It is found in the plastid. The protein localises to the chloroplast thylakoid membrane. It catalyses the reaction a plastoquinone + NADH + (n+1) H(+)(in) = a plastoquinol + NAD(+) + n H(+)(out). The catalysed reaction is a plastoquinone + NADPH + (n+1) H(+)(in) = a plastoquinol + NADP(+) + n H(+)(out). Its function is as follows. NDH shuttles electrons from NAD(P)H:plastoquinone, via FMN and iron-sulfur (Fe-S) centers, to quinones in the photosynthetic chain and possibly in a chloroplast respiratory chain. The immediate electron acceptor for the enzyme in this species is believed to be plastoquinone. Couples the redox reaction to proton translocation, and thus conserves the redox energy in a proton gradient. The protein is NAD(P)H-quinone oxidoreductase subunit N, chloroplastic of Arabidopsis thaliana (Mouse-ear cress).